The following is a 372-amino-acid chain: N-methyl-L-tryptophan oxidase (372 aa).

4–34 is an FAD binding site; the sequence is DLIIIGSGSVGAAAGYYATRAGLNVLMTDAH. Cys-308 is subject to S-8alpha-FAD cysteine.

It belongs to the MSOX/MTOX family. MTOX subfamily. Monomer. FAD serves as cofactor.

The catalysed reaction is N(alpha)-methyl-L-tryptophan + O2 + H2O = L-tryptophan + formaldehyde + H2O2. Functionally, catalyzes the oxidative demethylation of N-methyl-L-tryptophan. The sequence is that of N-methyl-L-tryptophan oxidase from Shigella sonnei (strain Ss046).